The primary structure comprises 209 residues: GTP-binding protein RHO1 (209 aa).

Position 2 is an N-acetylserine (Ser2). Position 17-24 (17-24 (GDGACGKT)) interacts with GTP. Residues 39 to 47 (YVPTVFENY) carry the Effector region motif. GTP contacts are provided by residues 64–68 (DTAGQ) and 122–125 (CKVD). Residues 187-209 (KSKTNGKAKKNTTEKKKKKCVLL) are disordered. Basic residues predominate over residues 190 to 209 (TNGKAKKNTTEKKKKKCVLL). At Cys206 the chain carries Cysteine methyl ester. Cys206 carries the S-geranylgeranyl cysteine lipid modification. Residues 207–209 (VLL) constitute a propeptide, removed in mature form.

Belongs to the small GTPase superfamily. Rho family. In terms of assembly, interacts with BEM4; the interaction is direct. Interacts with SEC3; the interaction is direct. Interacts with the GAP BAG7. Interacts with the GAP LRG1. Interacts with the GAP SAC7. Interacts with the GAP RDI1. Interacts with the 1,3-beta-glucan synthase component FKS1. Interacts with the protein kinase PKC1. Interacts with the G protein beta subunit STE4. Interacts with SKN7. Interacts with TUS1. Interacts with BNI1.

The protein resides in the cell membrane. Its subcellular location is the endosome membrane. The protein localises to the peroxisome membrane. It catalyses the reaction GTP + H2O = GDP + phosphate + H(+). Its activity is regulated as follows. Alternates between an inactive form bound to GDP and an active form bound to GTP. Activated by the guanine nucleotide-exchange factors (GEFs) ROM1, ROM2 and TUS1, and inactivated by GTPase-activating proteins (GAPs) BAG7, BEM2, LRG1, and SAC7, and the Rho GDP-dissociation inhibitor RDI1. The different GAPs regulate RHO1 in a target-specific manner. Functionally, acts as a central regulator in the cell wall integrity signaling pathway, which is regulated by the cell cycle and in response to various types of cell wall stress. Integrates signals from different cell surface sensors, and activates a set of effectors, regulating processes including beta-glucan synthesis at the site of wall remodeling, gene expression related to cell wall biogenesis, organization of the actin cytoskeleton, and protein- and secretory vesicle-targeting to the growth site. Activates the protein kinase C (PKC1) MAP kinase cascade, the beta-1,3-glucan synthase (FKS1), the formin BNI1, the exocyst component SEC3 and the transcription factor SKN7. This is GTP-binding protein RHO1 (RHO1) from Saccharomyces cerevisiae (strain ATCC 204508 / S288c) (Baker's yeast).